Here is a 408-residue protein sequence, read N- to C-terminus: NADH-quinone oxidoreductase subunit D (408 aa).

It belongs to the complex I 49 kDa subunit family. As to quaternary structure, NDH-1 is composed of 14 different subunits. Subunits NuoB, C, D, E, F, and G constitute the peripheral sector of the complex.

It localises to the cell inner membrane. The catalysed reaction is a quinone + NADH + 5 H(+)(in) = a quinol + NAD(+) + 4 H(+)(out). NDH-1 shuttles electrons from NADH, via FMN and iron-sulfur (Fe-S) centers, to quinones in the respiratory chain. The immediate electron acceptor for the enzyme in this species is believed to be ubiquinone. Couples the redox reaction to proton translocation (for every two electrons transferred, four hydrogen ions are translocated across the cytoplasmic membrane), and thus conserves the redox energy in a proton gradient. This Campylobacter jejuni subsp. jejuni serotype O:6 (strain 81116 / NCTC 11828) protein is NADH-quinone oxidoreductase subunit D.